Reading from the N-terminus, the 100-residue chain is Urease subunit gamma (100 aa).

This sequence belongs to the urease gamma subunit family. In terms of assembly, heterotrimer of UreA (gamma), UreB (beta) and UreC (alpha) subunits. Three heterotrimers associate to form the active enzyme.

Its subcellular location is the cytoplasm. The enzyme catalyses urea + 2 H2O + H(+) = hydrogencarbonate + 2 NH4(+). Its pathway is nitrogen metabolism; urea degradation; CO(2) and NH(3) from urea (urease route): step 1/1. This is Urease subunit gamma from Enterobacter sp. (strain 638).